The primary structure comprises 372 residues: Putative glutamate--cysteine ligase 2 (372 aa).

It belongs to the glutamate--cysteine ligase type 2 family. YbdK subfamily. As to quaternary structure, homodimer.

The enzyme catalyses L-cysteine + L-glutamate + ATP = gamma-L-glutamyl-L-cysteine + ADP + phosphate + H(+). ATP-dependent carboxylate-amine ligase which exhibits weak glutamate--cysteine ligase activity. The chain is Putative glutamate--cysteine ligase 2 from Citrobacter koseri (strain ATCC BAA-895 / CDC 4225-83 / SGSC4696).